Reading from the N-terminus, the 534-residue chain is 26S proteasome non-ATPase regulatory subunit 3 (534 aa).

Residues 1–16 (MKQEGSARRRGADKAK) are compositionally biased toward basic and acidic residues. The interval 1-69 (MKQEGSARRR…AEHSQRELDT (69 aa)) is disordered. A compositionally biased stretch (pro residues) spans 17 to 32 (PPPGGGEQEPPPPPAP). Residue Lys38 forms a Glycyl lysine isopeptide (Lys-Gly) (interchain with G-Cter in SUMO1); alternate linkage. Lys38 is covalently cross-linked (Glycyl lysine isopeptide (Lys-Gly) (interchain with G-Cter in SUMO2); alternate). Residues 286-465 (ARYLYYTGRI…GYVQSKEMID (180 aa)) form the PCI domain. 2 positions are modified to phosphoserine: Ser418 and Ser430. A disordered region spans residues 500–534 (SYNKDLESAEERREREQQDLEFAKEMAEDDDDSFP). The span at 501 to 525 (YNKDLESAEERREREQQDLEFAKEM) shows a compositional bias: basic and acidic residues.

Belongs to the proteasome subunit S3 family. In terms of assembly, component of the 19S proteasome regulatory particle complex. The 26S proteasome consists of a 20S core particle (CP) and two 19S regulatory subunits (RP). The regulatory particle is made of a lid composed of 9 subunits including PSMD3, a base containing 6 ATPases and few additional components. Interacts with UBQLN1 (via ubiquitin-like domain). Interacts with ERCC6.

Component of the 26S proteasome, a multiprotein complex involved in the ATP-dependent degradation of ubiquitinated proteins. This complex plays a key role in the maintenance of protein homeostasis by removing misfolded or damaged proteins, which could impair cellular functions, and by removing proteins whose functions are no longer required. Therefore, the proteasome participates in numerous cellular processes, including cell cycle progression, apoptosis, or DNA damage repair. This Homo sapiens (Human) protein is 26S proteasome non-ATPase regulatory subunit 3 (PSMD3).